The sequence spans 711 residues: Pentatricopeptide repeat-containing protein At5g46580, chloroplastic (711 aa).

The transit peptide at 1 to 43 (MATVLTTAIDVCFNPQNSDTKKHSLFLKPSLFRQSRSRKLNIS) directs the protein to the chloroplast. PPR repeat units lie at residues 185–219 (ETIF…GVEL), 220–254 (DNIT…GLMP), 255–289 (DEVT…GWKP), 290–324 (DAIA…DVKP), 325–359 (NVVV…GLTP), 360–394 (NEKT…KWPM), 395–425 (DFIL…MKES), 431–465 (DNFS…GVQV), 466–500 (NVMG…GVKP), and 501–535 (DDRL…NKKL). The 83-residue stretch at 614–696 (LDVRSLSVGA…IFVATKEDLV (83 aa)) folds into the Smr domain.

The protein belongs to the PPR family. P subfamily.

The protein localises to the plastid. It localises to the chloroplast. The sequence is that of Pentatricopeptide repeat-containing protein At5g46580, chloroplastic from Arabidopsis thaliana (Mouse-ear cress).